The primary structure comprises 485 residues: MKFIVKLFPEIMIKSETVRKRFAKILTSNIRNILQKYDEETAVVRHWDYIEVRSKNEENREELIALLQRIPGIHHFLEVEEKPFTDLHHIFELTLADVAQQLQGKTFCVRVKRKGKHKFSSIEAERYIGGGLNQHIESAKVRLKNPDVTVRIDIEDDKMMLVKARHAGIGGYPIGTQEDVLSLISGGFDSGVSSYMLIRRGSRVHYCFFNLGGVAHEIGVKQMAYHIWQRYSASHKVRFIAINFEGVVGEILEKVDNGQMGVVLKRMMVRAASKVAQRFNIEAIVTGEALGQVSSQTLTNLRLIDEAADALVLRPLITHDKEQIIAMAKEIGTDDIAKSMPEFCGVISKNPTIKAVREKIVTEEGYFNFEILESAVQNAKYLDIRQIAEETEKEVVEVEAISVLSENEVILDIRSPEETDENPFKSDTHEVIQMPFYKLSSQFGSLDQSKNYVLYCERGVMSKLQALYLKENGFSNVRVFAKKIH.

The THUMP domain occupies 61-165 (EELIALLQRI…DDKMMLVKAR (105 aa)). ATP-binding positions include 183-184 (LI), Lys-265, Gly-287, and Gln-296. Cysteines 344 and 456 form a disulfide. A Rhodanese domain is found at 404 to 483 (LSENEVILDI…FSNVRVFAKK (80 aa)). Cys-456 functions as the Cysteine persulfide intermediate in the catalytic mechanism.

This sequence belongs to the ThiI family.

The protein resides in the cytoplasm. The catalysed reaction is [ThiI sulfur-carrier protein]-S-sulfanyl-L-cysteine + a uridine in tRNA + 2 reduced [2Fe-2S]-[ferredoxin] + ATP + H(+) = [ThiI sulfur-carrier protein]-L-cysteine + a 4-thiouridine in tRNA + 2 oxidized [2Fe-2S]-[ferredoxin] + AMP + diphosphate. The enzyme catalyses [ThiS sulfur-carrier protein]-C-terminal Gly-Gly-AMP + S-sulfanyl-L-cysteinyl-[cysteine desulfurase] + AH2 = [ThiS sulfur-carrier protein]-C-terminal-Gly-aminoethanethioate + L-cysteinyl-[cysteine desulfurase] + A + AMP + 2 H(+). It functions in the pathway cofactor biosynthesis; thiamine diphosphate biosynthesis. Its function is as follows. Catalyzes the ATP-dependent transfer of a sulfur to tRNA to produce 4-thiouridine in position 8 of tRNAs, which functions as a near-UV photosensor. Also catalyzes the transfer of sulfur to the sulfur carrier protein ThiS, forming ThiS-thiocarboxylate. This is a step in the synthesis of thiazole, in the thiamine biosynthesis pathway. The sulfur is donated as persulfide by IscS. The protein is tRNA sulfurtransferase of Haemophilus influenzae (strain PittEE).